A 287-amino-acid polypeptide reads, in one-letter code: MAIRTFRPYTPGTRTRVVTDFNEVTGRKPERSLVVAKHRRKGRNNRGVITCRHRGGGHKRLYRIVDFRRNKHGIPAKVAAIHYDPHRKAHLALLFYTDGEKRYILAPAGIAIGQQLISGPESPIETGNALPLSAIPLGSSVHNVELYAGRGGQMARTAGSSAQVMAKEGDYVALKLPSTEVRLVRHECYATLGEVGNSEVRNTSLGKAGRRRWLGRRPQVRGSVMNPCDHPHGGGEGRAPIGRSGPVTPWGKPALGLKTRKRNKPSNRFVLRKRRRTSKRSRGGRDS.

Residues 221–287 (RGSVMNPCDH…SKRSRGGRDS (67 aa)) form a disordered region. Positions 258–287 (KTRKRNKPSNRFVLRKRRRTSKRSRGGRDS) are enriched in basic residues.

The protein belongs to the universal ribosomal protein uL2 family. In terms of assembly, part of the 50S ribosomal subunit. Forms a bridge to the 30S subunit in the 70S ribosome.

One of the primary rRNA binding proteins. Required for association of the 30S and 50S subunits to form the 70S ribosome, for tRNA binding and peptide bond formation. It has been suggested to have peptidyltransferase activity; this is somewhat controversial. Makes several contacts with the 16S rRNA in the 70S ribosome. The protein is Large ribosomal subunit protein uL2 of Prochlorococcus marinus (strain MIT 9313).